We begin with the raw amino-acid sequence, 360 residues long: Photosystem II protein D1 3 (360 aa).

Transmembrane regions (helical) follow at residues 29-46 (YVGW…AATI), 118-133 (HFLI…EWEL), and 142-156 (WICV…AATA). Residue His-118 participates in chlorophyll a binding. Tyr-126 contributes to the pheophytin a binding site. Residues Asp-170 and Glu-189 each coordinate [CaMn4O5] cluster. The helical transmembrane segment at 197-218 (FHQLGVAGVFGGALFSAMHGSL) threads the bilayer. Chlorophyll a is bound at residue His-198. Residues His-215 and 264–265 (SF) each bind a quinone. His-215 provides a ligand contact to Fe cation. His-272 serves as a coordination point for Fe cation. The chain crosses the membrane as a helical span at residues 274 to 288 (FLAAWPVIGIWFTAL). His-332, Glu-333, Asp-342, and Ala-344 together coordinate [CaMn4O5] cluster. The propeptide occupies 345–360 (SAESAPVAMIAPSING).

Belongs to the reaction center PufL/M/PsbA/D family. PSII is composed of 1 copy each of membrane proteins PsbA, PsbB, PsbC, PsbD, PsbE, PsbF, PsbH, PsbI, PsbJ, PsbK, PsbL, PsbM, PsbT, PsbX, PsbY, PsbZ, Psb30/Ycf12, peripheral proteins PsbO, CyanoQ (PsbQ), PsbU, PsbV and a large number of cofactors. It forms dimeric complexes. Precursor protein interacts with Ycf48. It depends on The D1/D2 heterodimer binds P680, chlorophylls that are the primary electron donor of PSII, and subsequent electron acceptors. It shares a non-heme iron and each subunit binds pheophytin, quinone, additional chlorophylls, carotenoids and lipids. D1 provides most of the ligands for the Mn4-Ca-O5 cluster of the oxygen-evolving complex (OEC). There is also a Cl(-1) ion associated with D1 and D2, which is required for oxygen evolution. The PSII complex binds additional chlorophylls, carotenoids and specific lipids. as a cofactor. C-terminally processed by CtpA; processing is essential to allow assembly of the oxygen-evolving complex and thus photosynthetic growth. Post-translationally, tyr-161 forms a radical intermediate that is referred to as redox-active TyrZ, YZ or Y-Z.

It is found in the cellular thylakoid membrane. It catalyses the reaction 2 a plastoquinone + 4 hnu + 2 H2O = 2 a plastoquinol + O2. Its function is as follows. Photosystem II (PSII) is a light-driven water:plastoquinone oxidoreductase that uses light energy to abstract electrons from H(2)O, generating O(2) and a proton gradient subsequently used for ATP formation. It consists of a core antenna complex that captures photons, and an electron transfer chain that converts photonic excitation into a charge separation. The D1/D2 (PsbA/PsbD) reaction center heterodimer binds P680, the primary electron donor of PSII as well as several subsequent electron acceptors. The polypeptide is Photosystem II protein D1 3 (Thermosynechococcus vestitus (strain NIES-2133 / IAM M-273 / BP-1)).